Here is a 101-residue protein sequence, read N- to C-terminus: Small ribosomal subunit protein uS14 (101 aa).

The protein belongs to the universal ribosomal protein uS14 family. In terms of assembly, part of the 30S ribosomal subunit. Contacts proteins S3 and S10.

Its function is as follows. Binds 16S rRNA, required for the assembly of 30S particles and may also be responsible for determining the conformation of the 16S rRNA at the A site. This is Small ribosomal subunit protein uS14 from Neisseria gonorrhoeae (strain ATCC 700825 / FA 1090).